A 156-amino-acid polypeptide reads, in one-letter code: Cyclic pyranopterin monophosphate synthase (156 aa).

Substrate is bound by residues 75–77 (LCH) and 111–112 (ME). Asp126 is a catalytic residue.

It belongs to the MoaC family. In terms of assembly, homohexamer; trimer of dimers.

It carries out the reaction (8S)-3',8-cyclo-7,8-dihydroguanosine 5'-triphosphate = cyclic pyranopterin phosphate + diphosphate. It participates in cofactor biosynthesis; molybdopterin biosynthesis. Catalyzes the conversion of (8S)-3',8-cyclo-7,8-dihydroguanosine 5'-triphosphate to cyclic pyranopterin monophosphate (cPMP). In Caulobacter sp. (strain K31), this protein is Cyclic pyranopterin monophosphate synthase.